The chain runs to 98 residues: NADH-ubiquinone oxidoreductase chain 4L (98 aa).

3 helical membrane passes run 1-21, 28-48, and 59-79; these read MAPINLNLILAFSLALLGVLI, STLLCLEGMMLSLFILMTLLI, and APLILLVFSACEAGVGLALLV.

Belongs to the complex I subunit 4L family. Core subunit of respiratory chain NADH dehydrogenase (Complex I) which is composed of 45 different subunits.

It is found in the mitochondrion inner membrane. It carries out the reaction a ubiquinone + NADH + 5 H(+)(in) = a ubiquinol + NAD(+) + 4 H(+)(out). In terms of biological role, core subunit of the mitochondrial membrane respiratory chain NADH dehydrogenase (Complex I) which catalyzes electron transfer from NADH through the respiratory chain, using ubiquinone as an electron acceptor. Part of the enzyme membrane arm which is embedded in the lipid bilayer and involved in proton translocation. This chain is NADH-ubiquinone oxidoreductase chain 4L (MT-ND4L), found in Perameles gunnii (Eastern barred bandicoot).